We begin with the raw amino-acid sequence, 186 residues long: dCTP deaminase (186 aa).

Position 107–112 (Lys-107–Arg-112) interacts with dCTP. Glu-133 (proton donor/acceptor) is an active-site residue. 3 residues coordinate dCTP: Gln-152, Tyr-166, and Gln-176.

It belongs to the dCTP deaminase family. As to quaternary structure, homotrimer.

It carries out the reaction dCTP + H2O + H(+) = dUTP + NH4(+). It participates in pyrimidine metabolism; dUMP biosynthesis; dUMP from dCTP (dUTP route): step 1/2. Its function is as follows. Catalyzes the deamination of dCTP to dUTP. This chain is dCTP deaminase, found in Campylobacter jejuni subsp. jejuni serotype O:6 (strain 81116 / NCTC 11828).